The chain runs to 76 residues: MKLTILFLVAAVLMSTQALIQHDGEKSQKAKMKFLTARTLSAKKRDVDCVGWSSYCGPWNNPPCCSWYTCDYYCKL.

The signal sequence occupies residues 1–18 (MKLTILFLVAAVLMSTQA). The propeptide occupies 19 to 42 (LIQHDGEKSQKAKMKFLTARTLSA). Cystine bridges form between C49–C65, C56–C70, and C64–C74.

The protein belongs to the conotoxin O2 superfamily. In terms of tissue distribution, expressed by the venom duct.

It is found in the secreted. The chain is Conotoxin VnMEKL-012 from Conus ventricosus (Mediterranean cone).